The sequence spans 863 residues: Oleate activated transcription factor 3 (863 aa).

Residues 18–47 (VCTNCKKRKSKCDRTKPCGTCVRLGDVDSC) constitute a DNA-binding region (zn(2)-C6 fungal-type). The span at 52-63 (DSSGQPESSPSL) shows a compositional bias: polar residues. The interval 52–99 (DSSGQPESSPSLNDADPLRKQSTPAERISPGFIKKRRSSQTRQDEDHW) is disordered.

It belongs to the OAF3 family.

It localises to the cytoplasm. The protein resides in the nucleus. Its subcellular location is the mitochondrion. Functionally, transcriptional inhibitor with a significantly increased number of target genes in response to oleate. The polypeptide is Oleate activated transcription factor 3 (OAF3) (Saccharomyces cerevisiae (strain ATCC 204508 / S288c) (Baker's yeast)).